We begin with the raw amino-acid sequence, 139 residues long: ATP synthase epsilon chain (139 aa).

Residues 89-110 (EARAEQARAEAEARRREAQSER) form a disordered region.

Belongs to the ATPase epsilon chain family. F-type ATPases have 2 components, CF(1) - the catalytic core - and CF(0) - the membrane proton channel. CF(1) has five subunits: alpha(3), beta(3), gamma(1), delta(1), epsilon(1). CF(0) has three main subunits: a, b and c.

It localises to the cell membrane. Its function is as follows. Produces ATP from ADP in the presence of a proton gradient across the membrane. The sequence is that of ATP synthase epsilon chain from Chloroflexus aurantiacus (strain ATCC 29366 / DSM 635 / J-10-fl).